Consider the following 598-residue polypeptide: Chaperone protein DnaK (598 aa).

Thr175 is subject to Phosphothreonine; by autocatalysis. Residues 571–591 (AKSAAASSNKDDSLNNNSSSN) are compositionally biased toward low complexity. Positions 571–598 (AKSAAASSNKDDSLNNNSSSNNDEETFE) are disordered.

This sequence belongs to the heat shock protein 70 family.

Functionally, acts as a chaperone. The sequence is that of Chaperone protein DnaK from Mycoplasmopsis agalactiae (strain NCTC 10123 / CIP 59.7 / PG2) (Mycoplasma agalactiae).